A 545-amino-acid polypeptide reads, in one-letter code: Probable protein kinase UbiB (545 aa).

The 379-residue stretch at 123 to 501 (DFDIVPLASA…RVRQHQSHYL (379 aa)) folds into the Protein kinase domain. ATP-binding positions include 129–137 (LASASIAQV) and Lys-152. Asp-287 (proton acceptor) is an active-site residue. 2 helical membrane-spanning segments follow: residues 498–518 (SHYL…VVLS) and 521–541 (EWDG…LVGW).

It belongs to the ABC1 family. UbiB subfamily.

The protein localises to the cell inner membrane. It functions in the pathway cofactor biosynthesis; ubiquinone biosynthesis [regulation]. Is probably a protein kinase regulator of UbiI activity which is involved in aerobic coenzyme Q (ubiquinone) biosynthesis. This chain is Probable protein kinase UbiB, found in Erwinia tasmaniensis (strain DSM 17950 / CFBP 7177 / CIP 109463 / NCPPB 4357 / Et1/99).